A 471-amino-acid polypeptide reads, in one-letter code: V-type ATP synthase beta chain (471 aa).

It belongs to the ATPase alpha/beta chains family.

Functionally, produces ATP from ADP in the presence of a proton gradient across the membrane. The V-type beta chain is a regulatory subunit. In Streptococcus pyogenes serotype M49 (strain NZ131), this protein is V-type ATP synthase beta chain.